We begin with the raw amino-acid sequence, 72 residues long: Small ribosomal subunit protein bS18 (72 aa).

Belongs to the bacterial ribosomal protein bS18 family. Part of the 30S ribosomal subunit. Forms a tight heterodimer with protein bS6.

In terms of biological role, binds as a heterodimer with protein bS6 to the central domain of the 16S rRNA, where it helps stabilize the platform of the 30S subunit. The sequence is that of Small ribosomal subunit protein bS18 from Aquifex aeolicus (strain VF5).